Reading from the N-terminus, the 344-residue chain is tRNA N6-adenosine threonylcarbamoyltransferase (344 aa).

His110 and His114 together coordinate Fe cation. Substrate contacts are provided by residues 133–137 (VMSGA), Asp166, Gly179, and Asn278. Asp303 is a Fe cation binding site.

Belongs to the KAE1 / TsaD family. It depends on Fe(2+) as a cofactor.

It is found in the cytoplasm. The enzyme catalyses L-threonylcarbamoyladenylate + adenosine(37) in tRNA = N(6)-L-threonylcarbamoyladenosine(37) in tRNA + AMP + H(+). Required for the formation of a threonylcarbamoyl group on adenosine at position 37 (t(6)A37) in tRNAs that read codons beginning with adenine. Is involved in the transfer of the threonylcarbamoyl moiety of threonylcarbamoyl-AMP (TC-AMP) to the N6 group of A37, together with TsaE and TsaB. TsaD likely plays a direct catalytic role in this reaction. The chain is tRNA N6-adenosine threonylcarbamoyltransferase from Chlamydia felis (strain Fe/C-56) (Chlamydophila felis).